The chain runs to 548 residues: Probable nuclear hormone receptor HR3 (548 aa).

The disordered stretch occupies residues 1–27 (MNNNQFHELFGSQWPPDQHGGHSSAST). The segment at residues 101–176 (IIPCKVCGDK…LGMSRDAVKF (76 aa)) is a DNA-binding region (nuclear receptor). 2 consecutive NR C4-type zinc fingers follow at residues 104-124 (CKVC…CEGC) and 140-164 (CPRN…LQKC). The disordered stretch occupies residues 198 to 228 (MRAQNDAAPDSVYDAQQQTPSSSDQFHGHYN). Residues 211-222 (DAQQQTPSSSDQ) are compositionally biased toward polar residues. Residues 295-539 (ISKVLVKSLA…PALYKELFSL (245 aa)) enclose the NR LBD domain.

The protein belongs to the nuclear hormone receptor family. NR1 subfamily.

The protein resides in the nucleus. In terms of biological role, putative receptor whose ligand is not yet known. This is Probable nuclear hormone receptor HR3 (HR3) from Manduca sexta (Tobacco hawkmoth).